The chain runs to 450 residues: Transcription factor SCREAM2 (450 aa).

Disordered stretches follow at residues 1 to 47, 207 to 231, and 244 to 265; these read MNSD…NQND, RQSS…YERE, and GLNY…KGMP. Positions 209 to 220 are enriched in low complexity; that stretch reads SSSSKMCNSESS. Positions 221-230 are enriched in basic and acidic residues; that stretch reads SEMRKSSYER. Residues 263–312 enclose the bHLH domain; it reads GMPAKNLMAERRRRKKLNDRLYMLRSVVPKISKMDRASILGDAIDYLKEL. The ACT domain occupies 378–450; the sequence is NIHMFCGRRP…LDTAGYAGLV (73 aa).

In terms of assembly, homodimer. Heterodimers with SPCH, MUTE, and FAMA. Expressed constitutively in roots, leaves, stems, and flowers. Broad expression within stomatal cell lineages of leaf epidermis, except in mature guard-cells.

It is found in the nucleus. Mediates stomatal differentiation in the epidermis probably by controlling successive roles of SPCH, MUTE, and FAMA. Functions as a dimer with SPCH during stomatal initiation. The chain is Transcription factor SCREAM2 (SCRM2) from Arabidopsis thaliana (Mouse-ear cress).